The sequence spans 364 residues: Hepatitis A virus cellular receptor 1 (364 aa).

An N-terminal signal peptide occupies residues 1–20 (MHPQVVILSLILHLADSVAG). Residues 21–121 (SVKVGGEAGP…WFNDMKITVS (101 aa)) enclose the Ig-like V-type domain. At 21-295 (SVKVGGEAGP…SLLTANTTKG (275 aa)) the chain is on the extracellular side. 3 disulfide bridges follow: Cys36/Cys105, Cys46/Cys57, and Cys52/Cys104. An N-linked (GlcNAc...) asparagine glycan is attached at Asn65. 12 consecutive repeat copies span residues 138–143 (VPTVTT), 144–149 (VRTSTT), 150–155 (VPTTTT), 156–160 (VPMTT), 161–165 (VPTTT), 166–171 (VPTTMS), 172–177 (IPTTTT), 178–183 (VLTTMT), 184–189 (VSTTTS), 190–195 (VPTTTS), 196–201 (IPTTTS), and 202–207 (VPVTTT). Residues 138–207 (VPTVTTVRTS…TTTSVPVTTT (70 aa)) are 12 X 6 AA approximate tandem repeats of V-P-T-T-T-T]. The disordered stretch occupies residues 216 to 257 (PLPRQNHEPVATSPSSPQPAETHPTTLQGAIRREPTSSPLYS). Residues 227–243 (TSPSSPQPAETHPTTLQ) show a composition bias toward polar residues. Asn263, Asn277, and Asn291 each carry an N-linked (GlcNAc...) asparagine glycan. The chain crosses the membrane as a helical span at residues 296 to 316 (IYAGVCISVLVLLALLGVIIA). Topologically, residues 317–364 (KKYFFKKEVQQLSVSFSSLQIKALQNAVEKEVQAEDNIYIENSLYATD) are cytoplasmic. Residues Lys338 and Lys346 each participate in a glycyl lysine isopeptide (Lys-Gly) (interchain with G-Cter in ubiquitin) cross-link.

It belongs to the immunoglobulin superfamily. TIM family. In terms of assembly, interacts with STAM. Interacts with SELPLG. As to quaternary structure, (Microbial infection) Interacts with hepatitis A virus capsid proteins. (Microbial infection) Interacts with Ebolavirus envelope glycoprotein GP. In terms of assembly, (Microbial infection) Interacts with Zika virus envelope protein E. In terms of processing, ubiquitinated at two lysine residues Lys-338 and Lys-346 on its cytoplasmic domain. Ubiquitination promotes receptor endocytosis and target receptors for lysosomal degradation and termination of receptor signaling. (Microbial infection) Ubiquitination is required for Dengue virus endocytosis. Widely expressed, with highest levels in kidney and testis. Expressed by activated CD4+ T-cells during the development of helper T-cells responses.

It localises to the cell membrane. Its function is as follows. Phosphatidylserine receptor that plays an important functional role in regulatory B-cells homeostasis including generation, expansion and suppressor functions. As P-selectin/SELPLG ligand, plays a specialized role in activated but not naive T-cell trafficking during inflammatory responses. Controls thereby T-cell accumulation in the inflamed central nervous system (CNS) and the induction of autoimmune disease. Also regulates expression of various anti-inflammatory cytokines and co-inhibitory ligands including IL10. Acts as a regulator of T-cell proliferation. May play a role in kidney injury and repair. Functionally, (Microbial infection) Acts as a receptor for Hepatitis A virus. (Microbial infection) Acts as a receptor for Ebolavirus and Marburg virus by binding exposed phosphatidyl-serine at the surface of virion membrane. Serves as a dual receptor for Ebolavirus by also interacting with envelope glycoprotein GP. In terms of biological role, (Microbial infection) Acts as a receptor for Dengue virus by binding exposed phosphatidyl-serine at the surface of virion membrane. TIM1 and Dengue virus are co-internalized during virus entry. Its function is as follows. (Microbial infection) Acts as a receptor for Zika virus by binding to envelope protein E. Functionally, (Microbial infection) Plays a positive role in Chikungunya virus cell entry. This is Hepatitis A virus cellular receptor 1 (HAVCR1) from Homo sapiens (Human).